The chain runs to 278 residues: MNVKKVPNVPGSPALSALLKLGVIGGLGLYCIGSSMYNVDGGHRAIVFNRFTGIKDRVYPEGTHFKIPLFERAIIYDVRSRPYVENSQTGSNDLQTVTIGLRVLTRPMGDRLPEIYRTLGQNYGERVLPSIINETLKAVVAQYNASHLITQREAVSREIRKIVTERAAKFNIALDDVSITNLKFGKEFTEAIEKKQVAAQEAERAKFIVEKAEQDKKSAIIRAQGEAKSAQLIGQAIANNEAFITLRKIEAAREIAQTIAKSANKVYLNSSDLLISKQ.

At methionine 1–alanine 14 the chain is on the mitochondrial matrix side. A helical; Signal-anchor for type II membrane protein membrane pass occupies residues leucine 15–tyrosine 37. The Mitochondrial intermembrane segment spans residues asparagine 38–glutamine 278. Positions lysine 186–isoleucine 220 form a coiled coil.

This sequence belongs to the prohibitin family. Component of a prohibitin multimeric complex in mitochondrial membranes.

It is found in the mitochondrion inner membrane. Functionally, prohibitin probably acts as a holdase/unfoldase for the stabilization of newly synthesized mitochondrial proteins. This chain is Prohibitin-7, mitochondrial (PHB7), found in Arabidopsis thaliana (Mouse-ear cress).